The chain runs to 89 residues: Small ribosomal subunit protein uS15 (89 aa).

It belongs to the universal ribosomal protein uS15 family. As to quaternary structure, part of the 30S ribosomal subunit. Forms a bridge to the 50S subunit in the 70S ribosome, contacting the 23S rRNA.

Its function is as follows. One of the primary rRNA binding proteins, it binds directly to 16S rRNA where it helps nucleate assembly of the platform of the 30S subunit by binding and bridging several RNA helices of the 16S rRNA. In terms of biological role, forms an intersubunit bridge (bridge B4) with the 23S rRNA of the 50S subunit in the ribosome. The protein is Small ribosomal subunit protein uS15 of Pseudomonas fluorescens (strain SBW25).